Here is a 406-residue protein sequence, read N- to C-terminus: Cysteine desulfurase (406 aa).

K226 carries the N6-(pyridoxal phosphate)lysine modification. The active-site Cysteine persulfide intermediate is C364.

It belongs to the class-V pyridoxal-phosphate-dependent aminotransferase family. Csd subfamily. As to quaternary structure, homodimer. Interacts with SufE and the SufBCD complex composed of SufB, SufC and SufD. The interaction with SufE is required to mediate the direct transfer of the sulfur atom from the S-sulfanylcysteine. Pyridoxal 5'-phosphate serves as cofactor.

The protein localises to the cytoplasm. The enzyme catalyses (sulfur carrier)-H + L-cysteine = (sulfur carrier)-SH + L-alanine. It catalyses the reaction L-selenocysteine + AH2 = hydrogenselenide + L-alanine + A + H(+). It participates in cofactor biosynthesis; iron-sulfur cluster biosynthesis. Its function is as follows. Cysteine desulfurases mobilize the sulfur from L-cysteine to yield L-alanine, an essential step in sulfur metabolism for biosynthesis of a variety of sulfur-containing biomolecules. Component of the suf operon, which is activated and required under specific conditions such as oxidative stress and iron limitation. Acts as a potent selenocysteine lyase in vitro, that mobilizes selenium from L-selenocysteine. Selenocysteine lyase activity is however unsure in vivo. The protein is Cysteine desulfurase of Escherichia coli O8 (strain IAI1).